The chain runs to 314 residues: L-lactate dehydrogenase (314 aa).

NAD(+) contacts are provided by residues Val16, Asp37, Lys42, Tyr68, and 82-83 (GV). Substrate contacts are provided by Gln85 and Arg91. NAD(+) is bound by residues Ser104, 121–123 (ASN), and Thr146. A substrate-binding site is contributed by 123-126 (NPVD). 151 to 154 (DTTR) provides a ligand contact to substrate. Beta-D-fructose 1,6-bisphosphate contacts are provided by Arg156 and His171. His178 serves as the catalytic Proton acceptor. A Phosphotyrosine modification is found at Tyr223. Substrate is bound at residue Thr232.

Belongs to the LDH/MDH superfamily. LDH family. In terms of assembly, homotetramer.

It localises to the cytoplasm. The enzyme catalyses (S)-lactate + NAD(+) = pyruvate + NADH + H(+). It functions in the pathway fermentation; pyruvate fermentation to lactate; (S)-lactate from pyruvate: step 1/1. Allosterically activated by fructose 1,6-bisphosphate (FBP). Functionally, catalyzes the conversion of lactate to pyruvate. The polypeptide is L-lactate dehydrogenase (Lactococcus lactis subsp. cremoris (strain MG1363)).